We begin with the raw amino-acid sequence, 68 residues long: Conotoxin tx3b (68 aa).

An N-terminal signal peptide occupies residues 1–19 (MSKLGALLTICLLLFSLTA). A propeptide spanning residues 20 to 52 (VPLDGDQHADQPAQRLQDRIPTEDHPLFDPNKR) is cleaved from the precursor. Disulfide bonds link cysteine 53–cysteine 67, cysteine 54–cysteine 63, and cysteine 59–cysteine 66. The residue at position 61 (methionine 61) is a Methionine sulfoxide; partial. Residue cysteine 67 is modified to Cysteine amide.

In terms of tissue distribution, expressed by the venom duct.

It is found in the secreted. Intracranial injection into mice causes scratching, hyperactivity and circular motion. The polypeptide is Conotoxin tx3b (Conus textile (Cloth-of-gold cone)).